The sequence spans 231 residues: Putative 3-methyladenine DNA glycosylase (231 aa).

This sequence belongs to the DNA glycosylase MPG family.

This Pseudomonas fluorescens (strain Pf0-1) protein is Putative 3-methyladenine DNA glycosylase.